The sequence spans 156 residues: Small ribosomal subunit protein uS7 (156 aa).

The protein belongs to the universal ribosomal protein uS7 family. As to quaternary structure, part of the 30S ribosomal subunit. Contacts proteins S9 and S11.

Functionally, one of the primary rRNA binding proteins, it binds directly to 16S rRNA where it nucleates assembly of the head domain of the 30S subunit. Is located at the subunit interface close to the decoding center, probably blocks exit of the E-site tRNA. The polypeptide is Small ribosomal subunit protein uS7 (Saccharophagus degradans (strain 2-40 / ATCC 43961 / DSM 17024)).